A 358-amino-acid polypeptide reads, in one-letter code: Peptide chain release factor 1 (358 aa).

Residue Q237 is modified to N5-methylglutamine.

The protein belongs to the prokaryotic/mitochondrial release factor family. Post-translationally, methylated by PrmC. Methylation increases the termination efficiency of RF1.

Its subcellular location is the cytoplasm. Functionally, peptide chain release factor 1 directs the termination of translation in response to the peptide chain termination codons UAG and UAA. The sequence is that of Peptide chain release factor 1 from Streptomyces coelicolor (strain ATCC BAA-471 / A3(2) / M145).